We begin with the raw amino-acid sequence, 474 residues long: L-arabinose isomerase (474 aa).

Mn(2+) is bound by residues glutamate 306, glutamate 331, histidine 348, and histidine 447.

This sequence belongs to the arabinose isomerase family. It depends on Mn(2+) as a cofactor.

It catalyses the reaction beta-L-arabinopyranose = L-ribulose. The protein operates within carbohydrate degradation; L-arabinose degradation via L-ribulose; D-xylulose 5-phosphate from L-arabinose (bacterial route): step 1/3. Functionally, catalyzes the conversion of L-arabinose to L-ribulose. In Lactiplantibacillus plantarum (strain ATCC BAA-793 / NCIMB 8826 / WCFS1) (Lactobacillus plantarum), this protein is L-arabinose isomerase.